A 252-amino-acid chain; its full sequence is Outer membrane protein P1 (252 aa).

A signal peptide spans 1 to 23 (METTTKLAIGVSALCCLASAAFA).

This sequence belongs to the Coxiella porin P1 (CPP1) (TC 1.B.43) family. May form trimers.

It is found in the cell outer membrane. Its function is as follows. Able to form a pore in lipid bilayers. This is Outer membrane protein P1 (ompP1) from Coxiella burnetii (strain RSA 493 / Nine Mile phase I).